The sequence spans 418 residues: Pentatricopeptide repeat-containing protein At2g18520, mitochondrial (418 aa).

The N-terminal 14 residues, 1–14 (MTSSRLYLRFLRRF), are a transit peptide targeting the mitochondrion. PPR repeat units follow at residues 101–135 (TETFLSTLIRSYGRASMFDHAMKMFEEMDKLGTPR), 136–166 (TVVSFNALLAACLHSDLFERVPQLFDEFPQR), 173–207 (DKISYGMLIKSYCDSGKPEKAMEIMRDMEVKGVEV), 208–242 (TIIAFTTILGSLYKNGLVDEAESLWIEMVNKGCDL), 243–276 (DNTVYNVRLMNAAKESPERVKELMEEMSSVGLKP), 277–311 (DTVSYNYLMTAYCVKGMMSEAKKVYEGLEQPNAAT), 312–342 (FRTLIFHLCINGLYDQGLTVFKKSAIVHKIP), and 343–373 (DFKTCKHLTEGLVKNNRMEDARGVARIVKKK).

This sequence belongs to the PPR family. P subfamily.

It is found in the mitochondrion. The sequence is that of Pentatricopeptide repeat-containing protein At2g18520, mitochondrial from Arabidopsis thaliana (Mouse-ear cress).